The primary structure comprises 182 residues: Regulatory protein RecX (182 aa).

Residues L12 to V54 are disordered. The segment covering S13 to R24 has biased composition (basic and acidic residues). Positions A43–V54 are enriched in polar residues.

This sequence belongs to the RecX family.

It is found in the cytoplasm. Modulates RecA activity. The polypeptide is Regulatory protein RecX (Yersinia pseudotuberculosis serotype I (strain IP32953)).